The following is a 52-amino-acid chain: Transcriptional regulator SlrA (52 aa).

The Sin domain occupies 1–38 (MKTHVKKDLDKGWHMLIQEARSIGLGIHDVRQFLESET).

In terms of assembly, component of the SlrR/SlrA complex.

Required specifically for induction of eps and yqxM operons by antagonizing SinR. Regulates SlrR activity. Controls the initiation of biofilm formation. In Bacillus subtilis (strain 168), this protein is Transcriptional regulator SlrA (slrA).